Consider the following 87-residue polypeptide: Acyl-CoA-binding protein (87 aa).

The residue at position 2 (serine 2) is an N-acetylserine. The 86-residue stretch at serine 2–isoleucine 87 folds into the ACB domain. At lysine 8 the chain carries N6-acetyllysine; alternate. Lysine 8 carries the post-translational modification N6-succinyllysine; alternate. Lysine 14 is a binding site for an acyl-CoA. The residue at position 17 (lysine 17) is an N6-succinyllysine. Lysine 19 carries the post-translational modification N6-acetyllysine. The residue at position 29 (tyrosine 29) is a Phosphotyrosine. Residues tyrosine 29–lysine 33, lysine 51, lysine 55, and tyrosine 74 contribute to the an acyl-CoA site. Residue lysine 51 is modified to N6-acetyllysine. An N6-acetyllysine; alternate modification is found at lysine 55. Lysine 55 carries the post-translational modification N6-succinyllysine; alternate. Residue lysine 55 is modified to N6-(2-hydroxyisobutyryl)lysine; alternate. An N6-malonyllysine; alternate modification is found at lysine 55. Position 77 is an N6-acetyllysine; alternate (lysine 77). Residue lysine 77 is modified to N6-succinyllysine; alternate.

It belongs to the ACBP family. In terms of assembly, monomer.

Its subcellular location is the endoplasmic reticulum. It localises to the golgi apparatus. In terms of biological role, binds medium- and long-chain acyl-CoA esters with very high affinity and may function as an intracellular carrier of acyl-CoA esters. It is also able to displace diazepam from the benzodiazepine (BZD) recognition site located on the GABA type A receptor. It is therefore possible that this protein also acts as a neuropeptide to modulate the action of the GABA receptor. The protein is Acyl-CoA-binding protein (DBI) of Oryctolagus cuniculus (Rabbit).